The primary structure comprises 560 residues: Chaperonin GroEL 2 (560 aa).

Residues 29 to 32 (TLGP), 86 to 90 (DGTTT), Gly413, 478 to 480 (NAA), and Asp494 each bind ATP.

It belongs to the chaperonin (HSP60) family. As to quaternary structure, forms a cylinder of 14 subunits composed of two heptameric rings stacked back-to-back. Interacts with the co-chaperonin GroES.

It localises to the cytoplasm. It carries out the reaction ATP + H2O + a folded polypeptide = ADP + phosphate + an unfolded polypeptide.. Its function is as follows. Together with its co-chaperonin GroES, plays an essential role in assisting protein folding. The GroEL-GroES system forms a nano-cage that allows encapsulation of the non-native substrate proteins and provides a physical environment optimized to promote and accelerate protein folding. The polypeptide is Chaperonin GroEL 2 (Nostoc sp. (strain PCC 7120 / SAG 25.82 / UTEX 2576)).